We begin with the raw amino-acid sequence, 513 residues long: PPE family protein PPE4 (513 aa).

Helical transmembrane passes span 233 to 253 (IIIA…PLLF), 277 to 297 (FLLP…PIVL), and 309 to 329 (LAAA…AVTG). 2 disordered regions span residues 395–446 (AAAA…ERGA) and 469–513 (LAGD…HDSK).

Belongs to the mycobacterial PPE family.

The protein localises to the cell membrane. In terms of biological role, important for the siderophore-mediated iron-acquisition function of ESX-3. This is PPE family protein PPE4 (PPE4) from Mycobacterium tuberculosis (strain CDC 1551 / Oshkosh).